Reading from the N-terminus, the 124-residue chain is UPF0225 protein SCO1677 (124 aa).

The protein belongs to the UPF0225 family.

The chain is UPF0225 protein SCO1677 from Streptomyces coelicolor (strain ATCC BAA-471 / A3(2) / M145).